Consider the following 208-residue polypeptide: Adult-specific cuticular protein ACP-20 (208 aa).

Positions methionine 1–alanine 17 are cleaved as a signal peptide. Residues glycine 34–glycine 43 form repeat 1. The 2 X 10 AA repeats stretch occupies residues glycine 34–glycine 180. A Chitin-binding type R&amp;R domain is found at proline 64–leucine 135. The stretch at glycine 171 to glycine 180 is repeat 2.

In terms of tissue distribution, epidermal regions synthesizing hard cuticle.

Cuticular proteins play a significant role in determining the physical properties of cuticles. The sequence is that of Adult-specific cuticular protein ACP-20 (ACP20) from Tenebrio molitor (Yellow mealworm beetle).